The following is a 453-amino-acid chain: Phosphatidylserine decarboxylase proenzyme 1, mitochondrial (453 aa).

The N-terminal 29 residues, 1–29 (MKPRFPQNVYFLARYSYLRRFQHSQRRTF), are a transit peptide targeting the mitochondrion. Topologically, residues 30–74 (SSFLNNIRSNYSGARASPLGGSSGAGAGAGGGGTGDSKGNAFLVP) are mitochondrial matrix. Residues 75–93 (GATMATILMLGALHARRLY) traverse the membrane as a helical segment. Topologically, residues 94–453 (EDKKIEEKRE…GQALGRWKEE (360 aa)) are mitochondrial intermembrane. Catalysis depends on charge relay system; for autoendoproteolytic cleavage activity residues aspartate 199, histidine 296, and serine 408. The Schiff-base intermediate with substrate; via pyruvic acid; for decarboxylase activity role is filled by serine 408. Serine 408 carries the post-translational modification Pyruvic acid (Ser); by autocatalysis.

It belongs to the phosphatidylserine decarboxylase family. PSD-B subfamily. Eukaryotic type I sub-subfamily. In terms of assembly, heterodimer of a large membrane-associated beta subunit and a small pyruvoyl-containing alpha subunit. Pyruvate is required as a cofactor. Post-translationally, is synthesized initially as an inactive proenzyme. Formation of the active enzyme involves a self-maturation process in which the active site pyruvoyl group is generated from an internal serine residue via an autocatalytic post-translational modification. Two non-identical subunits are generated from the proenzyme in this reaction, and the pyruvate is formed at the N-terminus of the alpha chain, which is derived from the carboxyl end of the proenzyme. The autoendoproteolytic cleavage occurs by a canonical serine protease mechanism, in which the side chain hydroxyl group of the serine supplies its oxygen atom to form the C-terminus of the beta chain, while the remainder of the serine residue undergoes an oxidative deamination to produce ammonia and the pyruvoyl prosthetic group on the alpha chain. During this reaction, the Ser that is part of the protease active site of the proenzyme becomes the pyruvoyl prosthetic group, which constitutes an essential element of the active site of the mature decarboxylase. As to expression, expressed in roots, leaves, stems and flowers.

It localises to the mitochondrion. Its subcellular location is the mitochondrion inner membrane. The enzyme catalyses a 1,2-diacyl-sn-glycero-3-phospho-L-serine + H(+) = a 1,2-diacyl-sn-glycero-3-phosphoethanolamine + CO2. The protein operates within phospholipid metabolism; phosphatidylethanolamine biosynthesis; phosphatidylethanolamine from CDP-diacylglycerol: step 2/2. Functionally, catalyzes the formation of phosphatidylethanolamine (PtdEtn) from phosphatidylserine (PtdSer). Plays a central role in phospholipid metabolism and in the interorganelle trafficking of phosphatidylserine. Contributes only to a minor proportion of PtdEtn production. The protein is Phosphatidylserine decarboxylase proenzyme 1, mitochondrial (PSD1) of Arabidopsis thaliana (Mouse-ear cress).